The primary structure comprises 234 residues: Urease subunit alpha (234 aa).

The segment at 1 to 102 (MKLTPKELDK…LVTIHTPVEA (102 aa)) is urease gamma. Residues 103-234 (GSDKLAPGEV…GTINCGCDNK (132 aa)) are urease beta.

This sequence in the N-terminal section; belongs to the urease gamma subunit family. In the C-terminal section; belongs to the urease beta subunit family. Heterohexamer of 3 UreA (alpha) and 3 UreB (beta) subunits.

It localises to the cytoplasm. It carries out the reaction urea + 2 H2O + H(+) = hydrogencarbonate + 2 NH4(+). It functions in the pathway nitrogen metabolism; urea degradation; CO(2) and NH(3) from urea (urease route): step 1/1. This is Urease subunit alpha from Helicobacter heilmannii.